A 74-amino-acid chain; its full sequence is Histone H1.C8/H1.M1 (74 aa).

Residues 1–74 (MSDAAVPPKK…KAVKKAPKKK (74 aa)) form a disordered region. Positions 11–74 (ASPKKAAAKK…KAVKKAPKKK (64 aa)) are enriched in basic residues.

It localises to the nucleus. The protein localises to the chromosome. This Trypanosoma cruzi protein is Histone H1.C8/H1.M1.